A 180-amino-acid chain; its full sequence is ATP-dependent protease subunit HslV (180 aa).

T7 is an active-site residue. Na(+) is bound by residues A162, C165, and T168.

Belongs to the peptidase T1B family. HslV subfamily. A double ring-shaped homohexamer of HslV is capped on each side by a ring-shaped HslU homohexamer. The assembly of the HslU/HslV complex is dependent on binding of ATP.

It is found in the cytoplasm. It catalyses the reaction ATP-dependent cleavage of peptide bonds with broad specificity.. Its activity is regulated as follows. Allosterically activated by HslU binding. Protease subunit of a proteasome-like degradation complex believed to be a general protein degrading machinery. This is ATP-dependent protease subunit HslV from Dichelobacter nodosus (strain VCS1703A).